A 501-amino-acid polypeptide reads, in one-letter code: MEELRGYLEIDRPHQQRFLYPLLFQESIYALAHNHGLNGSILYEPMEDLGHDKKSSSLNVKRLIIQMYQQNHFIISFNDSNQNRFLGHSRNSYFQMVSEGFAVIVEIPFSMRLVSSLEKGSESHNFQSIHSIFPFLEDKLSYLNYVLDILIPHPIHLEILVQSLRQWIRDLPSLHLLRFFLHEHQNWNSFITTNTKKCSSFFSRENQRLFLFLYNFHVYQFESLFVFLRKQFFHLRSISFGSFLERTHFYGKIENFVVSMRNHSQNILWLFKDLFMHYVRYKGKSIMASRGTYLLMNKWKSHLVNFWQFRFYFWSQPGRIHINELSNHSFYFPGYLSGLRLNPSMVRSEMLENSFMIDAVIKRFDTVVPTIFLIGSLAKVKLCNVSGHPISKSVWADSSDSDILDQFGRICRNLSHYHSGSYKKHSLCRIKYILRLSCARTLARKHKSTVRAILKRLGSEFLDEFLTEEQEILSLIFPKTPFHSGRIWYLDIIRIHSLANH.

This sequence belongs to the intron maturase 2 family. MatK subfamily.

It localises to the plastid. The protein localises to the chloroplast. Its function is as follows. Usually encoded in the trnK tRNA gene intron. Probably assists in splicing its own and other chloroplast group II introns. This chain is Maturase K, found in Amborella trichopoda.